Here is a 174-residue protein sequence, read N- to C-terminus: ATP-dependent protease subunit HslV (174 aa).

Thr2 is an active-site residue. Na(+)-binding residues include Gly157, Cys160, and Thr163.

The protein belongs to the peptidase T1B family. HslV subfamily. As to quaternary structure, a double ring-shaped homohexamer of HslV is capped on each side by a ring-shaped HslU homohexamer. The assembly of the HslU/HslV complex is dependent on binding of ATP.

The protein resides in the cytoplasm. It carries out the reaction ATP-dependent cleavage of peptide bonds with broad specificity.. Its activity is regulated as follows. Allosterically activated by HslU binding. Its function is as follows. Protease subunit of a proteasome-like degradation complex believed to be a general protein degrading machinery. This Shewanella sediminis (strain HAW-EB3) protein is ATP-dependent protease subunit HslV.